We begin with the raw amino-acid sequence, 141 residues long: Histone H2B (141 aa).

Residues 1–10 (MPPKAAEKKP) are compositionally biased toward basic and acidic residues. Positions 1–49 (MPPKAAEKKPSTGGKAPAGGKAPAEKKEAGKKTAAAASGDKKKRGKTRK) are disordered. An N6-acetyllysine; alternate mark is found at Lys8 and Lys9. Residues Lys8 and Lys9 each participate in a glycyl lysine isopeptide (Lys-Gly) (interchain with G-Cter in SUMO); alternate cross-link. Residues 11–22 (STGGKAPAGGKA) are compositionally biased toward low complexity. Lys15 is subject to N6-acetyllysine. Residue Lys26 is modified to N6-acetyllysine; alternate. Residue Lys26 forms a Glycyl lysine isopeptide (Lys-Gly) (interchain with G-Cter in SUMO); alternate linkage. A Glycyl lysine isopeptide (Lys-Gly) (interchain with G-Cter in SUMO) cross-link involves residue Lys27. Residue Lys135 forms a Glycyl lysine isopeptide (Lys-Gly) (interchain with G-Cter in ubiquitin) linkage.

Belongs to the histone H2B family. In terms of assembly, the nucleosome is a histone octamer containing two molecules each of H2A, H2B, H3 and H4 assembled in one H3-H4 heterotetramer and two H2A-H2B heterodimers. The octamer wraps approximately 147 bp of DNA. Post-translationally, monoubiquitinated by the ubc2-bre1 complex to form H2BK123ub1. H2BK123ub1 gives a specific tag for epigenetic transcriptional activation and is also prerequisite for H3K4me and H3K79me formation. H2BK123ub1 also modulates the formation of double-strand breaks during meiosis and is a prerequisite for DNA-damage checkpoint activation. In terms of processing, acetylated by gcn5 to form H2BK11ac and H2BK16ac. H2BK16ac can also be formed by esa1. Acetylation of N-terminal lysines and particularly formation of H2BK11acK16ac has a positive effect on transcription. Sumoylation to form H2BK6su or H2BK7su, and probably also H2BK16su or H2BK17su, occurs preferentially near the telomeres and represses gene transcription.

Its subcellular location is the nucleus. The protein resides in the chromosome. In terms of biological role, core component of nucleosome. Nucleosomes wrap and compact DNA into chromatin, limiting DNA accessibility to the cellular machineries which require DNA as a template. Histones thereby play a central role in transcription regulation, DNA repair, DNA replication and chromosomal stability. DNA accessibility is regulated via a complex set of post-translational modifications of histones, also called histone code, and nucleosome remodeling. This Aspergillus niger (strain ATCC MYA-4892 / CBS 513.88 / FGSC A1513) protein is Histone H2B (htb1).